Consider the following 105-residue polypeptide: uncharacterized protein (105 aa).

Residues 4–26 (TQILLILFVGILVTTPHDIFIII) traverse the membrane as a helical segment.

It is found in the membrane. This is an uncharacterized protein from Rickettsia conorii (strain ATCC VR-613 / Malish 7).